A 636-amino-acid chain; its full sequence is Probable potassium transport system protein Kup (636 aa).

Helical transmembrane passes span 22–42 (LGLL…SPLY), 64–84 (ILSL…VMFI), 115–135 (LMVI…MITP), 150–170 (FDGI…ALFL), 182–202 (LFGP…VHGI), 220–240 (FFVV…LALT), 261–281 (WFIL…ALLL), 293–313 (LLAP…ATVI), 351–371 (IYIG…VIGF), 383–403 (VAVT…MLLL), 408–428 (PVLA…FFAA), and 433–453 (IVQG…LMST).

The protein belongs to the HAK/KUP transporter (TC 2.A.72) family.

Its subcellular location is the cell inner membrane. The catalysed reaction is K(+)(in) + H(+)(in) = K(+)(out) + H(+)(out). Its function is as follows. Transport of potassium into the cell. Likely operates as a K(+):H(+) symporter. This Pseudomonas putida (strain GB-1) protein is Probable potassium transport system protein Kup.